A 700-amino-acid chain; its full sequence is Long chain acyl-CoA synthetase 7, peroxisomal (700 aa).

Residues M1–S29 form a disordered region. A compositionally biased stretch (basic and acidic residues) spans E7–I18. The Microbody targeting signal signature appears at R10–I18. Residues D19–S29 are compositionally biased toward polar residues. I266 to K277 is an ATP binding site. A fatty acid-binding region spans residues D526 to K550. The Microbody targeting signal signature appears at S698–L700.

The protein belongs to the ATP-dependent AMP-binding enzyme family. Interacts with PEX5. Mg(2+) serves as cofactor. In terms of tissue distribution, expressed in roots, stems, leaves flowers and germinating seedling. Preferentially expressed in seeds.

The protein resides in the peroxisome. The enzyme catalyses a long-chain fatty acid + ATP + CoA = a long-chain fatty acyl-CoA + AMP + diphosphate. It catalyses the reaction decanoate + ATP + CoA = decanoyl-CoA + AMP + diphosphate. The catalysed reaction is dodecanoate + ATP + CoA = dodecanoyl-CoA + AMP + diphosphate. It carries out the reaction tetradecanoate + ATP + CoA = tetradecanoyl-CoA + AMP + diphosphate. The enzyme catalyses hexadecanoate + ATP + CoA = hexadecanoyl-CoA + AMP + diphosphate. It catalyses the reaction (9Z)-octadecenoate + ATP + CoA = (9Z)-octadecenoyl-CoA + AMP + diphosphate. The catalysed reaction is (9Z,12Z)-octadecadienoate + ATP + CoA = (9Z,12Z)-octadecadienoyl-CoA + AMP + diphosphate. It carries out the reaction (9Z,12Z,15Z)-octadecatrienoate + ATP + CoA = (9Z,12Z,15Z)-octadecatrienoyl-CoA + AMP + diphosphate. It functions in the pathway lipid metabolism; fatty acid metabolism. Its function is as follows. Activation of long-chain fatty acids for both synthesis of cellular lipids, and degradation via beta-oxidation. Preferentially uses palmitate, palmitoleate, oleate, linoleate and eicosenoate as substrates. Can use myristate and linolenate as substrates. Functions redundantly with LACS6 in lipid mobilization for beta-oxidation during seed germination, which is essential for postgerminative growth and seedling establishment. The chain is Long chain acyl-CoA synthetase 7, peroxisomal from Arabidopsis thaliana (Mouse-ear cress).